The chain runs to 117 residues: UPF0342 protein lmo2223 (117 aa).

This sequence belongs to the UPF0342 family.

This chain is UPF0342 protein lmo2223, found in Listeria monocytogenes serovar 1/2a (strain ATCC BAA-679 / EGD-e).